Consider the following 369-residue polypeptide: Peptide chain release factor 2 (369 aa).

Q250 is modified (N5-methylglutamine).

The protein belongs to the prokaryotic/mitochondrial release factor family. In terms of processing, methylated by PrmC. Methylation increases the termination efficiency of RF2.

The protein localises to the cytoplasm. In terms of biological role, peptide chain release factor 2 directs the termination of translation in response to the peptide chain termination codons UGA and UAA. The chain is Peptide chain release factor 2 (prfB) from Rickettsia prowazekii (strain Madrid E).